Consider the following 118-residue polypeptide: Protein RALF-like 24 (118 aa).

The N-terminal stretch at 1 to 22 is a signal peptide; it reads MSRSLALVYLSLLCLQTHLSIS. A propeptide spans 23–63 (removed in mature form); that stretch reads VTVPIPSVNGEIDAMLNRNGVIGEEEGEEMMPSEISRRVMM. Cystine bridges form between Cys81/Cys91 and Cys103/Cys109.

Belongs to the plant rapid alkalinization factor (RALF) family. Post-translationally, proteolytically cleaved, probably by S1P, a subtilisin-like serine protease (subtilase).

The protein resides in the secreted. Its function is as follows. Cell signaling peptide that may regulate plant stress, growth, and development. Mediates a rapid alkalinization of extracellular space by mediating a transient increase in the cytoplasmic Ca(2+) concentration leading to a calcium-dependent signaling events through a cell surface receptor and a concomitant activation of some intracellular mitogen-activated protein kinases. The polypeptide is Protein RALF-like 24 (RALFL24) (Arabidopsis thaliana (Mouse-ear cress)).